The following is a 795-amino-acid chain: Lon protease 1 (795 aa).

A Lon N-terminal domain is found at 9–204 (LPVLPLRNTV…RVLALLLRDL (196 aa)). Position 360-367 (360-367 (GPPGVGKT)) interacts with ATP. Residues 596–777 (EPQVGAAQGL…GEVLKLLLLP (182 aa)) enclose the Lon proteolytic domain. Active-site residues include Ser683 and Lys726.

This sequence belongs to the peptidase S16 family. Homohexamer. Organized in a ring with a central cavity.

It localises to the cytoplasm. The catalysed reaction is Hydrolysis of proteins in presence of ATP.. In terms of biological role, ATP-dependent serine protease that mediates the selective degradation of mutant and abnormal proteins as well as certain short-lived regulatory proteins. Required for cellular homeostasis and for survival from DNA damage and developmental changes induced by stress. Degrades polypeptides processively to yield small peptide fragments that are 5 to 10 amino acids long. Binds to DNA in a double-stranded, site-specific manner. The sequence is that of Lon protease 1 from Thermus thermophilus (strain ATCC BAA-163 / DSM 7039 / HB27).